Consider the following 325-residue polypeptide: Holliday junction branch migration complex subunit RuvB (325 aa).

The tract at residues 1-180 is large ATPase domain (RuvB-L); it reads MKNQLLDAKV…FGIHLKLNFY (180 aa). ATP-binding positions include L19, R20, G61, K64, T65, S66, 127–129, R170, Y180, and R217; that span reads EDF. T65 lines the Mg(2+) pocket. A small ATPAse domain (RuvB-S) region spans residues 181 to 251; sequence SCEELTQIVE…ITDYALNQLG (71 aa). The tract at residues 254 to 325 is head domain (RuvB-H); sequence KLGLDSSDHK…ITANALKHLH (72 aa). Residues R290, R309, and R314 each coordinate DNA.

Belongs to the RuvB family. In terms of assembly, homohexamer. Forms an RuvA(8)-RuvB(12)-Holliday junction (HJ) complex. HJ DNA is sandwiched between 2 RuvA tetramers; dsDNA enters through RuvA and exits via RuvB. An RuvB hexamer assembles on each DNA strand where it exits the tetramer. Each RuvB hexamer is contacted by two RuvA subunits (via domain III) on 2 adjacent RuvB subunits; this complex drives branch migration. In the full resolvosome a probable DNA-RuvA(4)-RuvB(12)-RuvC(2) complex forms which resolves the HJ.

Its subcellular location is the cytoplasm. It carries out the reaction ATP + H2O = ADP + phosphate + H(+). In terms of biological role, the RuvA-RuvB-RuvC complex processes Holliday junction (HJ) DNA during genetic recombination and DNA repair, while the RuvA-RuvB complex plays an important role in the rescue of blocked DNA replication forks via replication fork reversal (RFR). RuvA specifically binds to HJ cruciform DNA, conferring on it an open structure. The RuvB hexamer acts as an ATP-dependent pump, pulling dsDNA into and through the RuvAB complex. RuvB forms 2 homohexamers on either side of HJ DNA bound by 1 or 2 RuvA tetramers; 4 subunits per hexamer contact DNA at a time. Coordinated motions by a converter formed by DNA-disengaged RuvB subunits stimulates ATP hydrolysis and nucleotide exchange. Immobilization of the converter enables RuvB to convert the ATP-contained energy into a lever motion, pulling 2 nucleotides of DNA out of the RuvA tetramer per ATP hydrolyzed, thus driving DNA branch migration. The RuvB motors rotate together with the DNA substrate, which together with the progressing nucleotide cycle form the mechanistic basis for DNA recombination by continuous HJ branch migration. Branch migration allows RuvC to scan DNA until it finds its consensus sequence, where it cleaves and resolves cruciform DNA. This chain is Holliday junction branch migration complex subunit RuvB, found in Orientia tsutsugamushi (strain Boryong) (Rickettsia tsutsugamushi).